The following is a 331-amino-acid chain: L-lactate dehydrogenase A chain (331 aa).

Residues G29 to K57 and R98 each bind NAD(+). Substrate contacts are provided by R105, N137, and R168. N137 serves as a coordination point for NAD(+). The Proton acceptor role is filled by H192. T247 lines the substrate pocket.

Belongs to the LDH/MDH superfamily. LDH family. In terms of assembly, homotetramer.

Its subcellular location is the cytoplasm. The catalysed reaction is (S)-lactate + NAD(+) = pyruvate + NADH + H(+). It participates in fermentation; pyruvate fermentation to lactate; (S)-lactate from pyruvate: step 1/1. Functionally, interconverts simultaneously and stereospecifically pyruvate and lactate with concomitant interconversion of NADH and NAD(+). The protein is L-lactate dehydrogenase A chain (ldha) of Notothenia angustata (Rockcod).